Reading from the N-terminus, the 811-residue chain is Mitochondrial intermediate peptidase (811 aa).

The N-terminal 25 residues, 1–25, are a transit peptide targeting the mitochondrion; it reads MRSGSRLSNYLVRLSGRVSFTQKRS. The segment at 423-450 is disordered; the sequence is TENGEKASTDTSTSTTTSTTTTDSTTTT. Low complexity predominate over residues 431–450; it reads TDTSTSTTTSTTTTDSTTTT. H593 provides a ligand contact to Zn(2+). The active site involves E594. Positions 597 and 600 each coordinate Zn(2+).

The protein belongs to the peptidase M3 family. Zn(2+) is required as a cofactor.

Its subcellular location is the mitochondrion matrix. It carries out the reaction Release of an N-terminal octapeptide as second stage of processing of some proteins imported into the mitochondrion.. In terms of biological role, cleaves proteins, imported into the mitochondrion, to their mature size. While most mitochondrial precursor proteins are processed to the mature form in one step by mitochondrial processing peptidase (MPP), the sequential cleavage by MIP of an octapeptide after initial processing by MPP is a required step for a subgroup of nuclear-encoded precursor proteins destined for the matrix or the inner membrane. This Lodderomyces elongisporus (strain ATCC 11503 / CBS 2605 / JCM 1781 / NBRC 1676 / NRRL YB-4239) (Yeast) protein is Mitochondrial intermediate peptidase (OCT1).